Here is a 156-residue protein sequence, read N- to C-terminus: ATP synthase subunit b (156 aa).

The helical transmembrane segment at 12–32 threads the bilayer; the sequence is VAFLIFVLFCMKYVWPPVITA.

This sequence belongs to the ATPase B chain family. As to quaternary structure, F-type ATPases have 2 components, F(1) - the catalytic core - and F(0) - the membrane proton channel. F(1) has five subunits: alpha(3), beta(3), gamma(1), delta(1), epsilon(1). F(0) has three main subunits: a(1), b(2) and c(10-14). The alpha and beta chains form an alternating ring which encloses part of the gamma chain. F(1) is attached to F(0) by a central stalk formed by the gamma and epsilon chains, while a peripheral stalk is formed by the delta and b chains.

Its subcellular location is the cell inner membrane. In terms of biological role, f(1)F(0) ATP synthase produces ATP from ADP in the presence of a proton or sodium gradient. F-type ATPases consist of two structural domains, F(1) containing the extramembraneous catalytic core and F(0) containing the membrane proton channel, linked together by a central stalk and a peripheral stalk. During catalysis, ATP synthesis in the catalytic domain of F(1) is coupled via a rotary mechanism of the central stalk subunits to proton translocation. Functionally, component of the F(0) channel, it forms part of the peripheral stalk, linking F(1) to F(0). This is ATP synthase subunit b from Pseudomonas putida (strain ATCC 700007 / DSM 6899 / JCM 31910 / BCRC 17059 / LMG 24140 / F1).